The chain runs to 280 residues: Urease accessory protein UreD (280 aa).

The protein belongs to the UreD family. In terms of assembly, ureD, UreF and UreG form a complex that acts as a GTP-hydrolysis-dependent molecular chaperone, activating the urease apoprotein by helping to assemble the nickel containing metallocenter of UreC. The UreE protein probably delivers the nickel.

Its subcellular location is the cytoplasm. Its function is as follows. Required for maturation of urease via the functional incorporation of the urease nickel metallocenter. This is Urease accessory protein UreD from Pseudomonas aeruginosa (strain ATCC 15692 / DSM 22644 / CIP 104116 / JCM 14847 / LMG 12228 / 1C / PRS 101 / PAO1).